The following is a 188-amino-acid chain: Protein crossbronx-like (188 aa).

In terms of domain architecture, UBC core spans 15 to 174; that stretch reads KQGYHILAEY…ANQVVKLHCG (160 aa).

The protein belongs to the ubiquitin-conjugating enzyme family. FTS subfamily.

This is Protein crossbronx-like from Drosophila simulans (Fruit fly).